We begin with the raw amino-acid sequence, 878 residues long: Alanine--tRNA ligase (878 aa).

4 residues coordinate Zn(2+): His-568, His-572, Cys-670, and His-674.

Belongs to the class-II aminoacyl-tRNA synthetase family. Zn(2+) serves as cofactor.

Its subcellular location is the cytoplasm. It catalyses the reaction tRNA(Ala) + L-alanine + ATP = L-alanyl-tRNA(Ala) + AMP + diphosphate. Its function is as follows. Catalyzes the attachment of alanine to tRNA(Ala) in a two-step reaction: alanine is first activated by ATP to form Ala-AMP and then transferred to the acceptor end of tRNA(Ala). Also edits incorrectly charged Ser-tRNA(Ala) and Gly-tRNA(Ala) via its editing domain. This Latilactobacillus sakei subsp. sakei (strain 23K) (Lactobacillus sakei subsp. sakei) protein is Alanine--tRNA ligase.